The chain runs to 98 residues: Alpha-elicitin hibernalin (98 aa).

3 disulfide bridges follow: Cys-3–Cys-71, Cys-27–Cys-56, and Cys-51–Cys-95.

The protein localises to the secreted. Its function is as follows. Induces local and distal defense responses (incompatible hypersensitive reaction) in plants from the solanaceae and cruciferae families. Elicits leaf necrosis and causes the accumulation of pathogenesis-related proteins. Might interact with the lipidic molecules of the plasma membrane. The sequence is that of Alpha-elicitin hibernalin from Phytophthora hibernalis.